The following is a 249-amino-acid chain: RNA polymerase sigma factor SigI3 (249 aa).

The Polymerase core binding signature appears at 60-73 (EEFSIGLAAFNEAI). Positions 199-218 (MKEVLSRIKVNHKTIQRNRK) form a DNA-binding region, H-T-H motif.

Belongs to the sigma-70 factor family. SigI subfamily. As to quaternary structure, interacts with RsgI3.

Its subcellular location is the cytoplasm. Its activity is regulated as follows. Negatively regulated by the anti-sigma-I factor RsgI3. Binding of the polysaccharide substrate to RsgI3 may lead to the release and activation of SigI3. Its function is as follows. Sigma factors are initiation factors that promote the attachment of RNA polymerase to specific initiation sites and are then released. This sigma factor is involved in regulation of cellulosomal genes via an external polysaccharide-sensing mechanism. Recognizes the predicted promoters associated with sigI3 itself, pl11, ce12 and cipA. This is RNA polymerase sigma factor SigI3 from Acetivibrio thermocellus (strain ATCC 27405 / DSM 1237 / JCM 9322 / NBRC 103400 / NCIMB 10682 / NRRL B-4536 / VPI 7372) (Clostridium thermocellum).